The chain runs to 281 residues: Phosphonates import ATP-binding protein PhnC (281 aa).

The ABC transporter domain maps to 2 to 245 (FELKDVTRRF…AVKEIYGTDK (244 aa)). 34 to 41 (GRSGAGKS) provides a ligand contact to ATP.

The protein belongs to the ABC transporter superfamily. Phosphonates importer (TC 3.A.1.9.1) family. In terms of assembly, the complex is composed of two ATP-binding proteins (PhnC), two transmembrane proteins (PhnE) and a solute-binding protein (PhnD).

Its subcellular location is the cell inner membrane. It carries out the reaction phosphonate(out) + ATP + H2O = phosphonate(in) + ADP + phosphate + H(+). Part of the ABC transporter complex PhnCDE involved in phosphonates import. Responsible for energy coupling to the transport system. The protein is Phosphonates import ATP-binding protein PhnC of Rhizobium etli (strain ATCC 51251 / DSM 11541 / JCM 21823 / NBRC 15573 / CFN 42).